We begin with the raw amino-acid sequence, 288 residues long: uncharacterized protein (288 aa).

The 77-residue stretch at 5-81 folds into the HTH rpiR-type domain; sequence GNVLNKIGSL…LELSIELATK (77 aa). The H-T-H motif DNA-binding region spans 41–60; sequence LSEIAKHLQVGEATLVRFCR. Positions 129–269 constitute an SIS domain; the sequence is VVKVLKKARR…YALLVQGEED (141 aa).

This is an uncharacterized protein from Haemophilus influenzae (strain ATCC 51907 / DSM 11121 / KW20 / Rd).